The chain runs to 105 residues: Guanidinium exporter (105 aa).

A helical membrane pass occupies residues 1 to 21 (MSWIILLIAGLLEVVWAVGLK). Residues 22–28 (YTHGFSR) are Cytoplasmic-facing. A helical membrane pass occupies residues 29–49 (LTPSIITITAMVISMALLSWA). Over 50-57 (MKTLPVGT) the chain is Periplasmic. A helical membrane pass occupies residues 58–78 (AYAIWTGIGAVGAAITGILLL). Over 79–81 (GES) the chain is Cytoplasmic. A helical transmembrane segment spans residues 82–102 (ASPARLLSLGLIVAGIIGLKL). Topologically, residues 103 to 105 (SAH) are periplasmic.

It belongs to the drug/metabolite transporter (DMT) superfamily. Small multidrug resistance (SMR) (TC 2.A.7.1) family. Gdx/SugE subfamily.

It is found in the cell inner membrane. Its function is as follows. Guanidinium ion exporter. Couples guanidinium export to the proton motive force, exchanging one guanidinium ion for two protons. The chain is Guanidinium exporter from Salmonella typhi.